A 456-amino-acid chain; its full sequence is Cysteine--tRNA ligase (456 aa).

Cys28 contributes to the Zn(2+) binding site. The 'HIGH' region motif lies at 30–40; it reads MTVYDYCHLGH. Zn(2+) contacts are provided by Cys209, His234, and Glu238. A 'KMSKS' region motif is present at residues 266–270; it reads KMSKS. Lys269 provides a ligand contact to ATP.

This sequence belongs to the class-I aminoacyl-tRNA synthetase family. As to quaternary structure, monomer. Zn(2+) serves as cofactor.

It is found in the cytoplasm. The catalysed reaction is tRNA(Cys) + L-cysteine + ATP = L-cysteinyl-tRNA(Cys) + AMP + diphosphate. The chain is Cysteine--tRNA ligase from Dechloromonas aromatica (strain RCB).